A 526-amino-acid polypeptide reads, in one-letter code: Tyrosine-protein kinase transforming protein Src (526 aa).

Residues 1–15 (MGSSKSKPKGPSQRR) show a composition bias toward basic residues. The tract at residues 1–59 (MGSSKSKPKGPSQRRRSLEPPDSTHHGGFPASQTPNKTAAPDTHRTPSRSFGTVATEPK) is disordered. G2 is lipidated: N-myristoyl glycine; by host. Positions 16-25 (RSLEPPDSTH) are enriched in basic and acidic residues. Residues 81 to 142 (GGVTTFVALY…PSNYVAPSDS (62 aa)) form the SH3 domain. In terms of domain architecture, SH2 spans 148 to 245 (WYFGKITRRE…GLCHRLTNVC (98 aa)). Residues 267-517 (LRLEVKLGQG…TFEYLQAQLL (251 aa)) form the Protein kinase domain. Residues 273-281 (LGQGCFGEV) and K295 contribute to the ATP site. D386 (proton acceptor) is an active-site residue. Y416 is modified (phosphotyrosine; by autocatalysis).

It belongs to the protein kinase superfamily. Tyr protein kinase family. SRC subfamily. Homodimer. The phosphorylated form is termed pp60v-src.

It catalyses the reaction L-tyrosyl-[protein] + ATP = O-phospho-L-tyrosyl-[protein] + ADP + H(+). This phosphoprotein, required for both the initiation and the maintenance of neoplastic transformation, is a protein kinase that catalyzes the phosphorylation of tyrosine residues in vitro. This chain is Tyrosine-protein kinase transforming protein Src (V-SRC), found in Rous sarcoma virus subgroup E (strain Schmidt-Ruppin) (RSV-SR-E).